The sequence spans 538 residues: NAD(P)H-quinone oxidoreductase chain 4 (538 aa).

14 consecutive transmembrane segments (helical) span residues 11–31 (FPWL…VPFI), 43–63 (YALI…FKGF), 95–115 (MPLI…AWPV), 119–139 (PKLF…VFAV), 143–163 (LLFF…LAIW), 175–195 (FIIY…AMGF), 217–237 (GFQL…LPIV), 251–271 (TAPV…YALL), 285–305 (FAPL…LTSF), 314–334 (IAYS…SFSS), 340–360 (AMLQ…LVGA), 382–404 (IMFA…SGFI), 425–445 (IVVA…LLSM), and 472–492 (IYII…PKIM).

This sequence belongs to the complex I subunit 4 family.

It localises to the cellular thylakoid membrane. It carries out the reaction a plastoquinone + NADH + (n+1) H(+)(in) = a plastoquinol + NAD(+) + n H(+)(out). It catalyses the reaction a plastoquinone + NADPH + (n+1) H(+)(in) = a plastoquinol + NADP(+) + n H(+)(out). Functionally, NDH-1 shuttles electrons from NAD(P)H, via FMN and iron-sulfur (Fe-S) centers, to quinones in the respiratory chain. The immediate electron acceptor for the enzyme in this species is believed to be plastoquinone. Couples the redox reaction to proton translocation (for every two electrons transferred, four hydrogen ions are translocated across the cytoplasmic membrane), and thus conserves the redox energy in a proton gradient. This Prochlorococcus marinus (strain NATL2A) protein is NAD(P)H-quinone oxidoreductase chain 4.